A 675-amino-acid chain; its full sequence is DNA ligase (675 aa).

NAD(+) contacts are provided by residues 35 to 39 (DSEYD), 84 to 85 (SL), and Glu115. Lys117 functions as the N6-AMP-lysine intermediate in the catalytic mechanism. Positions 138, 175, 292, and 316 each coordinate NAD(+). 4 residues coordinate Zn(2+): Cys410, Cys413, Cys428, and Cys434. One can recognise a BRCT domain in the interval 593–675 (QIVQPLLGRT…RNFLDDTSFP (83 aa)).

It belongs to the NAD-dependent DNA ligase family. LigA subfamily. Requires Mg(2+) as cofactor. The cofactor is Mn(2+).

The catalysed reaction is NAD(+) + (deoxyribonucleotide)n-3'-hydroxyl + 5'-phospho-(deoxyribonucleotide)m = (deoxyribonucleotide)n+m + AMP + beta-nicotinamide D-nucleotide.. DNA ligase that catalyzes the formation of phosphodiester linkages between 5'-phosphoryl and 3'-hydroxyl groups in double-stranded DNA using NAD as a coenzyme and as the energy source for the reaction. It is essential for DNA replication and repair of damaged DNA. The protein is DNA ligase of Nitrosococcus oceani (strain ATCC 19707 / BCRC 17464 / JCM 30415 / NCIMB 11848 / C-107).